We begin with the raw amino-acid sequence, 225 residues long: Pyridoxine/pyridoxamine 5'-phosphate oxidase (225 aa).

Substrate-binding positions include 21–24 (RKSY) and Lys79. Residues 74–79 (RVVLIK), 89–90 (YT), Arg95, and Lys96 each bind FMN. The substrate site is built by Tyr136, Arg140, and Ser144. Residues 153 to 154 (QS) and Trp197 each bind FMN. 203–205 (RLH) is a substrate binding site. Arg207 provides a ligand contact to FMN.

It belongs to the pyridoxamine 5'-phosphate oxidase family. As to quaternary structure, homodimer. FMN is required as a cofactor.

The enzyme catalyses pyridoxamine 5'-phosphate + O2 + H2O = pyridoxal 5'-phosphate + H2O2 + NH4(+). It catalyses the reaction pyridoxine 5'-phosphate + O2 = pyridoxal 5'-phosphate + H2O2. It participates in cofactor metabolism; pyridoxal 5'-phosphate salvage; pyridoxal 5'-phosphate from pyridoxamine 5'-phosphate: step 1/1. The protein operates within cofactor metabolism; pyridoxal 5'-phosphate salvage; pyridoxal 5'-phosphate from pyridoxine 5'-phosphate: step 1/1. Catalyzes the oxidation of either pyridoxine 5'-phosphate (PNP) or pyridoxamine 5'-phosphate (PMP) into pyridoxal 5'-phosphate (PLP). The polypeptide is Pyridoxine/pyridoxamine 5'-phosphate oxidase (Paracidovorax citrulli (strain AAC00-1) (Acidovorax citrulli)).